The primary structure comprises 545 residues: Thermosome subunit beta (545 aa).

The protein belongs to the TCP-1 chaperonin family. As to quaternary structure, forms a Heterooligomeric complex of two stacked eight-membered rings.

Its function is as follows. Molecular chaperone; binds unfolded polypeptides in vitro, and has a weak ATPase activity. This chain is Thermosome subunit beta (thsB), found in Thermococcus sp. (strain KS-8).